Consider the following 141-residue polypeptide: Large-conductance mechanosensitive channel (141 aa).

3 consecutive transmembrane segments (helical) span residues 14–34 (VMDLAVGVIIGGAFGGIVKSL), 38–58 (IIMPIVGAIFGGFDFSNYFLG), and 81–101 (GSFITVLINFLILAWIIFLMV).

The protein belongs to the MscL family. In terms of assembly, homopentamer.

It is found in the cell inner membrane. In terms of biological role, channel that opens in response to stretch forces in the membrane lipid bilayer. May participate in the regulation of osmotic pressure changes within the cell. In Rhizobium rhizogenes (strain K84 / ATCC BAA-868) (Agrobacterium radiobacter), this protein is Large-conductance mechanosensitive channel.